A 150-amino-acid polypeptide reads, in one-letter code: Large ribosomal subunit protein bL9 (150 aa).

It belongs to the bacterial ribosomal protein bL9 family.

In terms of biological role, binds to the 23S rRNA. The polypeptide is Large ribosomal subunit protein bL9 (Pseudarthrobacter chlorophenolicus (strain ATCC 700700 / DSM 12829 / CIP 107037 / JCM 12360 / KCTC 9906 / NCIMB 13794 / A6) (Arthrobacter chlorophenolicus)).